The sequence spans 560 residues: Ribonuclease J 1 (560 aa).

Residues His76, His78, Asp80, His81, His144, and Asp166 each contribute to the Zn(2+) site. 366–370 lines the substrate pocket; sequence HTSGH. Position 392 (His392) interacts with Zn(2+).

Belongs to the metallo-beta-lactamase superfamily. RNA-metabolizing metallo-beta-lactamase-like family. Bacterial RNase J subfamily. Homodimer, may be a subunit of the RNA degradosome. Zn(2+) serves as cofactor.

The protein resides in the cytoplasm. An RNase that has 5'-3' exonuclease and possibly endonuclease activity. Involved in maturation of rRNA and in some organisms also mRNA maturation and/or decay. Has an overlapping but not completely redundant role with RNase J2 in the decay of mRNA. The polypeptide is Ribonuclease J 1 (Streptococcus pyogenes serotype M3 (strain ATCC BAA-595 / MGAS315)).